The sequence spans 297 residues: uncharacterized protein (297 aa).

The next 7 membrane-spanning stretches (helical) occupy residues 14 to 34, 55 to 75, 81 to 101, 110 to 130, 135 to 155, 163 to 183, and 208 to 228; these read LFLM…FLKF, LLLG…IYFF, FYFG…AGAL, AIIL…RVAF, LSTL…KLLF, IVGA…YGSI, and LIMT…SKCF.

The protein resides in the cell membrane. This is an uncharacterized protein from Methanocaldococcus jannaschii (strain ATCC 43067 / DSM 2661 / JAL-1 / JCM 10045 / NBRC 100440) (Methanococcus jannaschii).